Reading from the N-terminus, the 362-residue chain is Heme A synthase (362 aa).

The next 5 helical transmembrane spans lie at 15 to 35 (VRIW…VGGA), 104 to 124 (VIGI…AIAP), 129 to 149 (ALWA…WMVA), 161 to 181 (VRLA…VWTL), and 200 to 220 (AIAL…VAGL). H264 is a binding site for heme. Helical transmembrane passes span 266–285 (MMAY…ALRA), 293–313 (GALW…LTLL), and 316–336 (VPIG…TLAV). H324 contacts heme.

The protein belongs to the COX15/CtaA family. Type 2 subfamily. Interacts with CtaB. Heme b serves as cofactor.

The protein resides in the cell membrane. The catalysed reaction is Fe(II)-heme o + 2 A + H2O = Fe(II)-heme a + 2 AH2. Its pathway is porphyrin-containing compound metabolism; heme A biosynthesis; heme A from heme O: step 1/1. Functionally, catalyzes the conversion of heme O to heme A by two successive hydroxylations of the methyl group at C8. The first hydroxylation forms heme I, the second hydroxylation results in an unstable dihydroxymethyl group, which spontaneously dehydrates, resulting in the formyl group of heme A. The polypeptide is Heme A synthase (Rhodopseudomonas palustris (strain BisB5)).